A 193-amino-acid chain; its full sequence is Cysteine and glycine-rich protein 2 (193 aa).

The region spanning 10-61 is the LIM zinc-binding 1 domain; the sequence is CGACGRTVYHAEEVQCDGRSFHRCCFLCMVCRKNLDSTTVAIHDEEIYCKSC. The Nuclear localization signal signature appears at 64-69; it reads KKYGPK. A Glycyl lysine isopeptide (Lys-Gly) (interchain with G-Cter in SUMO2) cross-link involves residue Lys91. An N6-acetyllysine mark is found at Lys112 and Lys131. Positions 119-170 constitute an LIM zinc-binding 2 domain; sequence CSRCGDSVYAAEKIIGAGKPWHKNCFRCAKCGKSLESTTLTEKEGEIYCKGC. Lys137 bears the N6-acetyllysine; alternate mark. The residue at position 137 (Lys137) is an N6-succinyllysine; alternate. At Lys161 the chain carries N6-acetyllysine.

In terms of assembly, interacts with KAT14. The LIM domain 1 is necessary and sufficient for this interaction. Interacts with GLRX3.

The protein resides in the nucleus. Functionally, drastically down-regulated in response to PDGF-BB or cell injury, that promote smooth muscle cell proliferation and dedifferentiation. Seems to play a role in the development of the embryonic vascular system. This chain is Cysteine and glycine-rich protein 2 (CSRP2), found in Bos taurus (Bovine).